Here is a 1209-residue protein sequence, read N- to C-terminus: Putative lysine-specific demethylase JMJ16 (1209 aa).

The region spanning Ala146–Pro187 is the JmjN domain. Positions Met217–Pro224 match the Nuclear localization signal motif. The JmjC domain occupies Lys361–Cys527. 3 residues coordinate Fe cation: His407, Glu409, and His495. Zn(2+) is bound by residues Cys617, Cys620, Cys631, Cys633, Cys640, His643, Cys648, and Cys650. The C5HC2 zinc finger occupies Cys617–Asn667. The interval Asp872–Val900 is disordered. Positions Asn875–Gln884 are enriched in polar residues. The 59-residue stretch at Val974–Ala1032 folds into the FYR N-terminal domain. The region spanning Arg1034–Arg1124 is the FYR C-terminal domain.

It belongs to the JARID1 histone demethylase family. As to quaternary structure, interacts with MMD1 in the nucleus of male meiocytes, especially on pachytene chromosomes. Fe(2+) serves as cofactor. As to expression, confined to inflorescences.

It is found in the nucleus. It catalyses the reaction N(6),N(6),N(6)-trimethyl-L-lysyl(4)-[histone H3] + 2-oxoglutarate + O2 = N(6),N(6)-dimethyl-L-lysyl(4)-[histone H3] + formaldehyde + succinate + CO2. The catalysed reaction is N(6),N(6)-dimethyl-L-lysyl(4)-[histone H3] + 2-oxoglutarate + O2 = N(6)-methyl-L-lysyl(4)-[histone H3] + formaldehyde + succinate + CO2. It carries out the reaction N(6)-methyl-L-lysyl(4)-[histone H3] + 2-oxoglutarate + O2 = L-lysyl(4)-[histone H3] + formaldehyde + succinate + CO2. Functions as a histone H3 'Lys-4' (H3K4me) demethylase involved in the negative regulation of gene expression. Active on H3K4me1, H3K4me2 and H3K4me3. Not active on mono-, di- and trimethylated H3K9, H3K27 and H3K36 in somatic cells. However, also active on H3K9 when in complex with MMD1, a meiocyte-specific histone reader. Together with MMD1, promotes gene expression in male meiocytes in an H3K9me3-dependent manner, and contributes to meiotic chromosome condensation by triggering some condensin promoters (e.g. CAP-D3 and CAP-H). Together with JMJ14 and JMJ17, required for plant growth and development. Represses leaf senescence in an age-dependent manner by demethylating H3K4me3 activating histone marks at senescence-associated genes (SAGs) loci, including WRKY53 and SAG201, thus preventing their premature expression. In Arabidopsis thaliana (Mouse-ear cress), this protein is Putative lysine-specific demethylase JMJ16.